We begin with the raw amino-acid sequence, 616 residues long: Hemagglutinin-neuraminidase (616 aa).

The Intravirion segment spans residues 1–26 (MDRAVSQVALENDEREAKNTWRLVFR). The helical transmembrane segment at 27-47 (IAILLLTVVTLAISAAALAYS) threads the bilayer. Residues 48 to 616 (MEASTPSDLI…ELESYAASWP (569 aa)) are Virion surface-facing. Asparagine 119 is a glycosylation site (N-linked (GlcNAc...) asparagine; by host). An important for interaction with fusion/F protein region spans residues 124–152 (GAPIHDPDYIGGIGKELIVDDASDVTSFY). 3 disulfide bridges follow: cysteine 172-cysteine 196, cysteine 186-cysteine 247, and cysteine 238-cysteine 251. The segment at 234 to 239 (NRKSCS) is involved in neuraminidase activity. Asparagine 341 and asparagine 433 each carry an N-linked (GlcNAc...) asparagine; by host glycan. 2 disulfides stabilise this stretch: cysteine 344–cysteine 461 and cysteine 455–cysteine 465. N-linked (GlcNAc...) asparagine; by host glycosylation is found at asparagine 481, asparagine 538, and asparagine 600. An intrachain disulfide couples cysteine 531 to cysteine 542.

Belongs to the paramyxoviruses hemagglutinin-neuraminidase family. Homotetramer; composed of disulfide-linked homodimers. Interacts with F protein trimer. Interacts with host CG-1B; this interaction inhibits viral adsorption and replication rather than internalization.

It localises to the virion membrane. The protein localises to the host cell membrane. The catalysed reaction is Hydrolysis of alpha-(2-&gt;3)-, alpha-(2-&gt;6)-, alpha-(2-&gt;8)- glycosidic linkages of terminal sialic acid residues in oligosaccharides, glycoproteins, glycolipids, colominic acid and synthetic substrates.. In terms of biological role, mediates the viral entry into the host cell together with fusion/F protein. Attaches the virus to sialic acid-containing cell receptors and thereby initiates infection. Binding of HN protein to the receptor induces a conformational change that allows the F protein to trigger virion/cell membranes fusion. Its function is as follows. Neuraminidase activity ensures the efficient spread of the virus by dissociating the mature virions from the neuraminic acid containing glycoproteins. The sequence is that of Hemagglutinin-neuraminidase (HN) from Newcastle disease virus (strain Chicken/Northern Ireland/Ulster/67) (NDV).